Here is a 146-residue protein sequence, read N- to C-terminus: Mediator of RNA polymerase II transcription subunit 10 (146 aa).

It belongs to the Mediator complex subunit 10 family. In terms of assembly, component of the Mediator complex.

The protein resides in the nucleus. Functionally, component of the Mediator complex, a coactivator involved in the regulated transcription of nearly all RNA polymerase II-dependent genes. Mediator functions as a bridge to convey information from gene-specific regulatory proteins to the basal RNA polymerase II transcription machinery. Mediator is recruited to promoters by direct interactions with regulatory proteins and serves as a scaffold for the assembly of a functional preinitiation complex with RNA polymerase II and the general transcription factors. This is Mediator of RNA polymerase II transcription subunit 10 (NUT2) from Scheffersomyces stipitis (strain ATCC 58785 / CBS 6054 / NBRC 10063 / NRRL Y-11545) (Yeast).